The chain runs to 372 residues: E3 ubiquitin-protein ligase RNF34 (372 aa).

Residues 56–107 (EGPNIVCKACGLSFSVFRKKHVCCDCKKDFCSVCSVLQENLRRCSTCHLLQE) form an FYVE-type zinc finger. One can recognise an SAP 1 domain in the interval 115–134 (LMRLKVKDLRQYLILRNIPI). Ser-169 is modified (phosphoserine). Residues 194-253 (QGELMDGDQTSRSGVPAQVQSEITSANTEDDDDDDDEDDDDEEENAEDRNPGLSKERVRA) form a disordered region. A compositionally biased stretch (polar residues) spans 201–220 (DQTSRSGVPAQVQSEITSAN). The span at 221 to 239 (TEDDDDDDDEDDDDEEENA) shows a compositional bias: acidic residues. The segment covering 240–252 (EDRNPGLSKERVR) has biased composition (basic and acidic residues). Residues Ser-254 and Ser-256 each carry the phosphoserine modification. One can recognise an SAP 2 domain in the interval 264–278 (VEGMSVRQLKEILAR). The RING-type zinc-finger motif lies at 325-360 (CRICMDAVIDCVLLECGHMVTCTKCGKRMSECPICR).

In terms of assembly, interacts with CASP8 and CASP10. Interacts (via RING-type zinc finger) with PPARGC1A. Interacts with NOD1. Interacts with p53/TP53; involved in p53/TP53 ubiquitination. Interacts (via RING-type zinc finger) with MDM2; the interaction stabilizes MDM2. In terms of processing, autoubiquitinated (in vitro). Post-translationally, proteolytically cleaved by caspases upon induction of apoptosis by TNF. As to expression, ubiquitous. Detected in heart, brain, liver, skeletal muscle, kidney, pancreas, spleen, thymus, prostate, testis, ovary, colon and leukocytes.

The protein localises to the cell membrane. It is found in the endomembrane system. The protein resides in the nucleus. Its subcellular location is the nucleus speckle. It localises to the cytoplasm. The protein localises to the cytosol. It carries out the reaction S-ubiquitinyl-[E2 ubiquitin-conjugating enzyme]-L-cysteine + [acceptor protein]-L-lysine = [E2 ubiquitin-conjugating enzyme]-L-cysteine + N(6)-ubiquitinyl-[acceptor protein]-L-lysine.. It functions in the pathway protein modification; protein ubiquitination. In terms of biological role, E3 ubiquitin-protein ligase that regulates several biological processes through the ubiquitin-mediated proteasomal degradation of various target proteins. Ubiquitinates the caspases CASP8 and CASP10, promoting their proteasomal degradation, to negatively regulate cell death downstream of death domain receptors in the extrinsic pathway of apoptosis. May mediate 'Lys-48'-linked polyubiquitination of RIPK1 and its subsequent proteasomal degradation thereby indirectly regulating the tumor necrosis factor-mediated signaling pathway. Negatively regulates p53/TP53 through its direct ubiquitination and targeting to proteasomal degradation. Indirectly, may also negatively regulate p53/TP53 through ubiquitination and degradation of SFN. Mediates PPARGC1A proteasomal degradation probably through ubiquitination thereby indirectly regulating the metabolism of brown fat cells. Possibly involved in innate immunity, through 'Lys-48'-linked polyubiquitination of NOD1 and its subsequent proteasomal degradation. The chain is E3 ubiquitin-protein ligase RNF34 from Homo sapiens (Human).